A 591-amino-acid polypeptide reads, in one-letter code: DEAD-box ATP-dependent RNA helicase 35 (591 aa).

Residues 146–174 carry the Q motif motif; sequence KNFKDMKFPRPVLDTLKEKGIVQPTPIQV. Residues 177–361 enclose the Helicase ATP-binding domain; that stretch reads LPVILAGRDM…RSALVKPVTV (185 aa). Residue 190 to 197 participates in ATP binding; it reads AFTGSGKT. Residues 309-312 carry the DEAD box motif; that stretch reads DEAD. Residues 372–532 form the Helicase C-terminal domain; it reads DVIQEVEYVK…RIPPVLAELN (161 aa). The CCHC-type zinc finger occupies 548-565; that stretch reads KGCAYCGGLGHRIRDCPK.

Belongs to the DEAD box helicase family. DDX41 subfamily.

The catalysed reaction is ATP + H2O = ADP + phosphate + H(+). This chain is DEAD-box ATP-dependent RNA helicase 35 (RH35), found in Arabidopsis thaliana (Mouse-ear cress).